Here is a 322-residue protein sequence, read N- to C-terminus: Serine/threonine-protein phosphatase PP1 isozyme 6 (322 aa).

N-acetylmethionine is present on M1. Mn(2+) is bound by residues D61, H63, D89, and N121. The Proton donor role is filled by H122. Residues H170 and H245 each coordinate Mn(2+). Positions 303-322 (GFNNNVPRPGTPPHKGGKGR) are disordered.

The protein belongs to the PPP phosphatase family. PP-1 subfamily. It depends on Mn(2+) as a cofactor. Strongly up-regulated within developing flowers, especially in the tapetum, the developing and mature pollen and in the ovaries.

It localises to the nucleus. Its subcellular location is the cytoplasm. It catalyses the reaction O-phospho-L-seryl-[protein] + H2O = L-seryl-[protein] + phosphate. It carries out the reaction O-phospho-L-threonyl-[protein] + H2O = L-threonyl-[protein] + phosphate. Phosphatase activity is strongly reduced by the protein phosphatase inhibitor 2 (I-2). Its function is as follows. Serine/threonine-protein phosphatase that possesses phosphatase activity toward para-nitrophenyl phosphate (pNPP) in vitro. The polypeptide is Serine/threonine-protein phosphatase PP1 isozyme 6 (Arabidopsis thaliana (Mouse-ear cress)).